The primary structure comprises 198 residues: 3-isopropylmalate dehydratase small subunit (198 aa).

The protein belongs to the LeuD family. LeuD type 1 subfamily. In terms of assembly, heterodimer of LeuC and LeuD.

The catalysed reaction is (2R,3S)-3-isopropylmalate = (2S)-2-isopropylmalate. It participates in amino-acid biosynthesis; L-leucine biosynthesis; L-leucine from 3-methyl-2-oxobutanoate: step 2/4. Catalyzes the isomerization between 2-isopropylmalate and 3-isopropylmalate, via the formation of 2-isopropylmaleate. In Corynebacterium jeikeium (strain K411), this protein is 3-isopropylmalate dehydratase small subunit.